A 505-amino-acid polypeptide reads, in one-letter code: Methylmalonyl-CoA carboxyltransferase 5S subunit (505 aa).

The region spanning 14–276 is the Pyruvate carboxyltransferase domain; sequence VGITELVLRD…TTNLDYDRLH (263 aa). Residues 22–26, alanine 59, and lysine 184 each bind substrate; that span reads RDAHQ. Aspartate 23 is a binding site for Co(2+). Residues lysine 184, histidine 215, and histidine 217 each contribute to the Co(2+) site. Residue lysine 184 is modified to N6-carboxylysine; partial.

Homodimer. Transcarboxylase is composed of three subunits: 1.3S, 5S, and 12S. The core of the enzyme is composed of six 12S subunits. On each side of the core there are three pairs of 5S subunits. Each 5S dimer is attached to the core by two 1.3S subunits. Thus the total number of chains is 30 (6 + 12 + 12). The cofactor is Co(2+). In terms of processing, lys-184 is carboxylated in the free enzyme and helps to coordinate the cobalt ion. Lys-184 is partially carboxylated in the complex with pyruvate, but is not carboxylated in the oxaloacetate-bound form.

It catalyses the reaction (S)-methylmalonyl-CoA + pyruvate = propanoyl-CoA + oxaloacetate. Functionally, the 5S subunit specifically catalyzes the transfer of the carboxyl group from biotin of the 1.3S subunit to pyruvate to form oxaloacetate and 1.3S biotin. The chain is Methylmalonyl-CoA carboxyltransferase 5S subunit from Propionibacterium freudenreichii subsp. shermanii.